The primary structure comprises 157 residues: Large ribosomal subunit protein uL11 (157 aa).

The protein belongs to the universal ribosomal protein uL11 family.

In terms of biological role, this protein binds directly to 26S ribosomal RNA. This is Large ribosomal subunit protein uL11 (RPL12) from Chlamydomonas reinhardtii (Chlamydomonas smithii).